A 252-amino-acid chain; its full sequence is Imidazole glycerol phosphate synthase subunit HisF (252 aa).

Residues Asp13 and Asp132 contribute to the active site.

The protein belongs to the HisA/HisF family. In terms of assembly, heterodimer of HisH and HisF.

The protein localises to the cytoplasm. It carries out the reaction 5-[(5-phospho-1-deoxy-D-ribulos-1-ylimino)methylamino]-1-(5-phospho-beta-D-ribosyl)imidazole-4-carboxamide + L-glutamine = D-erythro-1-(imidazol-4-yl)glycerol 3-phosphate + 5-amino-1-(5-phospho-beta-D-ribosyl)imidazole-4-carboxamide + L-glutamate + H(+). Its pathway is amino-acid biosynthesis; L-histidine biosynthesis; L-histidine from 5-phospho-alpha-D-ribose 1-diphosphate: step 5/9. IGPS catalyzes the conversion of PRFAR and glutamine to IGP, AICAR and glutamate. The HisF subunit catalyzes the cyclization activity that produces IGP and AICAR from PRFAR using the ammonia provided by the HisH subunit. The sequence is that of Imidazole glycerol phosphate synthase subunit HisF from Campylobacter curvus (strain 525.92).